Consider the following 101-residue polypeptide: MAKKSAIETNERRRKLATGHAAKRARLKAIVNDKTLPIEERFQATLKLAEMPRNGAKIRIRNRCEVTGRPRAFYRKLKMSRIALRELGNQGMVPGLVKSSW.

Residues 1-11 (MAKKSAIETNE) are compositionally biased toward basic and acidic residues. The tract at residues 1–20 (MAKKSAIETNERRRKLATGH) is disordered.

It belongs to the universal ribosomal protein uS14 family. As to quaternary structure, part of the 30S ribosomal subunit. Contacts proteins S3 and S10.

In terms of biological role, binds 16S rRNA, required for the assembly of 30S particles and may also be responsible for determining the conformation of the 16S rRNA at the A site. The sequence is that of Small ribosomal subunit protein uS14 from Xanthobacter autotrophicus (strain ATCC BAA-1158 / Py2).